The chain runs to 541 residues: Probable inorganic phosphate transporter 1-8 (541 aa).

Over 1–28 (MARQEQQQHLQVLSALDAAKTQWYHFTA) the chain is Cytoplasmic. A helical membrane pass occupies residues 29 to 49 (IVVAGMGFFTDAYDLFCISLV). The Extracellular portion of the chain corresponds to 50-74 (TKLLGRIYYTDLAKENPGSLPPNVA). The chain crosses the membrane as a helical span at residues 75–95 (AAVNGVAFCGTLAGQLFFGWL). The Cytoplasmic segment spans residues 96-102 (GDKLGRK). Residues 103-123 (SVYGMTLLMMVICSIASGLSF) form a helical membrane-spanning segment. The Extracellular portion of the chain corresponds to 124-126 (SHT). Residues 127–147 (PTSVMATLCFFRFWLGFGIGG) traverse the membrane as a helical segment. The Cytoplasmic portion of the chain corresponds to 148-168 (DYPLSATIMSEYANKKTRGAF). The helical transmembrane segment at 169 to 189 (IAAVFAMQGFGILAGGIVTLI) threads the bilayer. Topologically, residues 190-215 (ISSAFRAGFPAPAYQDDRAGSTVRQA) are extracellular. Residues 216-236 (DYVWRIILMLGAMPALLTYYW) form a helical membrane-spanning segment. The Cytoplasmic portion of the chain corresponds to 237-297 (RMKMPETARY…GLFSRQFARR (61 aa)). A helical membrane pass occupies residues 298-318 (HGLHLVGTATTWFLLDIAFYS). The Extracellular portion of the chain corresponds to 319-353 (QNLFQKDIFTSINWIPKAKTMSALEEVFRIARAQT). The helical transmembrane segment at 354–374 (LIALCGTVPGYWFTVFLIDIV) threads the bilayer. At 375-376 (GR) the chain is on the cytoplasmic side. The chain crosses the membrane as a helical span at residues 377–397 (FAIQLLGFFMMTVFMLGLAVP). Residues 398 to 404 (YHHWTTK) are Extracellular-facing. Residues 405–425 (GNHIGFVVMYAFTFFFANFGP) form a helical membrane-spanning segment. Topologically, residues 426 to 447 (NSTTFIVPAEIFPARLRSTCHG) are cytoplasmic. The chain crosses the membrane as a helical span at residues 448-468 (ISAAAGKAGAIIGSFGFLYAA). Topologically, residues 469-486 (QDPHKPDAGYKPGIGVRN) are extracellular. The chain crosses the membrane as a helical span at residues 487–507 (SLFVLAGCNLLGFICTFLVPE). Residues 508-541 (SKGKSLEEMSGEAEDDDDEVAAAGGGAAVRPQTA) lie on the Cytoplasmic side of the membrane. Residues 514-541 (EEMSGEAEDDDDEVAAAGGGAAVRPQTA) are disordered. The span at 516–527 (MSGEAEDDDDEV) shows a compositional bias: acidic residues.

The protein belongs to the major facilitator superfamily. Phosphate:H(+) symporter (TC 2.A.1.9) family.

The protein resides in the membrane. Functionally, high-affinity transporter for external inorganic phosphate. This Oryza sativa subsp. japonica (Rice) protein is Probable inorganic phosphate transporter 1-8 (PHT1-8).